Here is a 415-residue protein sequence, read N- to C-terminus: L-threonine dehydratase biosynthetic IlvA (415 aa).

K53 is modified (N6-(pyridoxal phosphate)lysine). Residues N80, G183–L187, and S308 contribute to the pyridoxal 5'-phosphate site. Residues H332–K406 enclose the ACT-like domain.

The protein belongs to the serine/threonine dehydratase family. As to quaternary structure, homotetramer. Pyridoxal 5'-phosphate serves as cofactor.

The catalysed reaction is L-threonine = 2-oxobutanoate + NH4(+). It participates in amino-acid biosynthesis; L-isoleucine biosynthesis; 2-oxobutanoate from L-threonine: step 1/1. In terms of biological role, catalyzes the anaerobic formation of alpha-ketobutyrate and ammonia from threonine in a two-step reaction. The first step involved a dehydration of threonine and a production of enamine intermediates (aminocrotonate), which tautomerizes to its imine form (iminobutyrate). Both intermediates are unstable and short-lived. The second step is the nonenzymatic hydrolysis of the enamine/imine intermediates to form 2-ketobutyrate and free ammonia. In the low water environment of the cell, the second step is accelerated by RidA. The polypeptide is L-threonine dehydratase biosynthetic IlvA (ilvA) (Halalkalibacterium halodurans (strain ATCC BAA-125 / DSM 18197 / FERM 7344 / JCM 9153 / C-125) (Bacillus halodurans)).